The following is a 231-amino-acid chain: ATP phosphoribosyltransferase (231 aa).

It belongs to the ATP phosphoribosyltransferase family. Short subfamily. In terms of assembly, heteromultimer composed of HisG and HisZ subunits.

The protein localises to the cytoplasm. The catalysed reaction is 1-(5-phospho-beta-D-ribosyl)-ATP + diphosphate = 5-phospho-alpha-D-ribose 1-diphosphate + ATP. It functions in the pathway amino-acid biosynthesis; L-histidine biosynthesis; L-histidine from 5-phospho-alpha-D-ribose 1-diphosphate: step 1/9. Functionally, catalyzes the condensation of ATP and 5-phosphoribose 1-diphosphate to form N'-(5'-phosphoribosyl)-ATP (PR-ATP). Has a crucial role in the pathway because the rate of histidine biosynthesis seems to be controlled primarily by regulation of HisG enzymatic activity. This is ATP phosphoribosyltransferase from Sinorhizobium medicae (strain WSM419) (Ensifer medicae).